The following is a 97-amino-acid chain: Large ribosomal subunit protein bL28 (97 aa).

The protein belongs to the bacterial ribosomal protein bL28 family.

This chain is Large ribosomal subunit protein bL28, found in Bartonella quintana (strain Toulouse) (Rochalimaea quintana).